The following is a 262-amino-acid chain: Ornithine carbamoyltransferase (262 aa).

Carbamoyl phosphate-binding positions include 3–7 (STRTR), glutamine 30, arginine 54, and 81–84 (HPTQ). Residues asparagine 114, aspartate 178, and 182 to 183 (SM) contribute to the L-ornithine site. Carbamoyl phosphate-binding positions include 219–222 (HCLP) and threonine 247.

It belongs to the aspartate/ornithine carbamoyltransferase superfamily. OTCase family.

Its subcellular location is the cytoplasm. It carries out the reaction carbamoyl phosphate + L-ornithine = L-citrulline + phosphate + H(+). It functions in the pathway amino-acid biosynthesis; L-arginine biosynthesis; L-arginine from L-ornithine and carbamoyl phosphate: step 1/3. Functionally, reversibly catalyzes the transfer of the carbamoyl group from carbamoyl phosphate (CP) to the N(epsilon) atom of ornithine (ORN) to produce L-citrulline. The polypeptide is Ornithine carbamoyltransferase (argF) (Neisseria lactamica).